We begin with the raw amino-acid sequence, 158 residues long: Lectin-like protein EP153R (158 aa).

At 1–26 (MFLNKKYPSLIEKKMDDLMTLKFCYL) the chain is on the cytoplasmic side. The helical transmembrane segment at 27–47 (IITFLIITNIFSLAINIWGGG) threads the bilayer. Residues 48–158 (DMIDRQSCEN…YTETFFICSN (111 aa)) are Extracellular-facing. C61 and C72 form a disulfide bridge. Positions 61–157 (CPKDWVGYNN…KYTETFFICS (97 aa)) are lectin-like. Residues N81, N94, N100, N106, N112, N119, and N139 are each glycosylated (N-linked (GlcNAc...) asparagine; by host).

Belongs to the asfivirus lectin-like protein family. As to quaternary structure, homodimer.

It is found in the host endoplasmic reticulum membrane. Functionally, down-regulates MHC-I expression by impairing the appropriate configuration or presentation into the plasma membrane of the latter. Participates in viral hemadsorption, which may help viral spread. Reduces the transactivating activity of host TP53, thus inhibiting apoptosis. Non-essential for virus growth in swine macrophage cell cultures. The protein is Lectin-like protein EP153R of African swine fever virus (isolate Pig/Kenya/KEN-50/1950) (ASFV).